The sequence spans 128 residues: S-adenosylmethionine decarboxylase proenzyme (128 aa).

S61 acts as the Schiff-base intermediate with substrate; via pyruvic acid in catalysis. Pyruvic acid (Ser); by autocatalysis is present on S61. The active-site Proton acceptor; for processing activity is the H66. The active-site Proton donor; for catalytic activity is C81.

This sequence belongs to the prokaryotic AdoMetDC family. Type 1 subfamily. Heterotetramer of two alpha and two beta chains arranged as a dimer of alpha/beta heterodimers. Pyruvate serves as cofactor. Is synthesized initially as an inactive proenzyme. Formation of the active enzyme involves a self-maturation process in which the active site pyruvoyl group is generated from an internal serine residue via an autocatalytic post-translational modification. Two non-identical subunits are generated from the proenzyme in this reaction, and the pyruvate is formed at the N-terminus of the alpha chain, which is derived from the carboxyl end of the proenzyme. The post-translation cleavage follows an unusual pathway, termed non-hydrolytic serinolysis, in which the side chain hydroxyl group of the serine supplies its oxygen atom to form the C-terminus of the beta chain, while the remainder of the serine residue undergoes an oxidative deamination to produce ammonia and the pyruvoyl group blocking the N-terminus of the alpha chain.

It carries out the reaction S-adenosyl-L-methionine + H(+) = S-adenosyl 3-(methylsulfanyl)propylamine + CO2. It functions in the pathway amine and polyamine biosynthesis; S-adenosylmethioninamine biosynthesis; S-adenosylmethioninamine from S-adenosyl-L-methionine: step 1/1. Its function is as follows. Catalyzes the decarboxylation of S-adenosylmethionine to S-adenosylmethioninamine (dcAdoMet), the propylamine donor required for the synthesis of the polyamines spermine and spermidine from the diamine putrescine. This chain is S-adenosylmethionine decarboxylase proenzyme, found in Synechococcus sp. (strain WH7803).